A 204-amino-acid chain; its full sequence is Large ribosomal subunit protein uL4 (204 aa).

Positions 49 to 75 (TKGRSEVSGGGKKPWRQKGRGGARAGS) are disordered.

Belongs to the universal ribosomal protein uL4 family. As to quaternary structure, part of the 50S ribosomal subunit.

Functionally, one of the primary rRNA binding proteins, this protein initially binds near the 5'-end of the 23S rRNA. It is important during the early stages of 50S assembly. It makes multiple contacts with different domains of the 23S rRNA in the assembled 50S subunit and ribosome. Its function is as follows. Forms part of the polypeptide exit tunnel. This chain is Large ribosomal subunit protein uL4, found in Campylobacter hominis (strain ATCC BAA-381 / DSM 21671 / CCUG 45161 / LMG 19568 / NCTC 13146 / CH001A).